Consider the following 1345-residue polypeptide: MENWRTAEIFPKLDVSPNVFDDIRTQTAEQLFENLRLYYGDDSDRYNISFEALLGIYCNRTEWIDFFHTSIAVAANVIRFNDLDKMSLGKILFYIQLPRVATGNDVTAPKETTVLVTKYSEKHPINISFELSAACLAHLENTFKNTILDQMLNINAIHTVLRSLKNSADSLQRGLIYAFIKTILKKAPPQFILKTMLENKVNSKQILSKVQRSNMFQNFKNKLINSLFFLNRTSNVSFIYRYLCEMVDSTTESILNNTNSYVLKDGTPINGVLLGTPNTIQILSNALSQHISQMTMSVPVSYGTFVMGKENAVTAIAYQAIMADFSNYTKNVATETQDQNKKSEIFENQTQHADLKTNIIQLSDKTVVLDHLKKVYKNTNIEDPLEQKLELTFFFPMGLYISKDSGFSTMDSRLKLNDTMENNLPTSIYFYNKDKLLQRIDYSDLLPSLCHPIIFDCSVSERIFKNAAKPTGESFNQLCQVEFVREPPSTFLSNLYNLYEMKKEIPKTTNMLKNELTTEDFYKSENFTLKTELHPFFDFTYIQKNRSTDVLCSPRILLGNIPLPLAPSSFHEARTNQMIEQAKTNNLNYDYTLKLVVESLTNTAYPELAYIIELLIHGNKTAFQILKDVVSQCITYWYNIKHILLFCNNFEMIWLITTYLGDESIPGIAYTHYKNIISILKLVKRTISISNFNEQLCGEPLVGFVNALFDNRLFPPFLNSLPKNEANAIITAGNTPLTQNTVKLRNYEVSDLNRMNLLDSTEIFTDVDRPSFETIVLSKIFYFCFLPALTNNKMCGAGFDVKSFILDFFYTEPFILPDDNFCELPITNNVLIELITEAVGPSHALTDLSCIGKQLFKSILYLTENTKILEIESSLDPSQRHGSSSNFKSLQHVLYNGLCLVSPINVLKRYFKPIPFNRFFSDPIICGLMNIEVQTYLNIFPHYQRNDGGFPLPQALSHEFHNWQRTPFFVYASCCSNSLLSIMTLATMHCKLSPIAIILQSRQKIHPGFAATLVRTDCFDINCLLYSSKSATSIMIDDPTVSTEVKDISTTYNLTQHISFLDMGLGFSSSTAIANLKRVKTDMGSKVQDLFSVFPMHAYTNPTVNSWVRHHVGIEKPNPSETDALNILSFGKINKQSQSILLHGQQAICEVVITPVTSDINFYKTPKNPRGRASCMMGVDPHNESEARKSLYDHSRVDSDAFVATTNPWASQEGSLSDVLYNINHRDQLGYNPKSYSPNAVFFTDTEIFKTNKFMFKLISDYSIKTKTCLDSDTDIQYSCSEGTDDVTHRPCQFLQIAFPIHCSSNQALLESRSKNGMTQLSETHFANFAIGECIPLQNIIESLL.

Belongs to the herpesviridae major capsid protein family. As to quaternary structure, homomultimer. Makes the hexons and eleven out of twelve pentons. Interacts with triplex proteins 1/TRX1 and 2/TRX2; adjacent capsomers are linked together in groups of three by triplexes, heterotrimeric complexes composed of one molecule of TRX1 and two molecules of TRX2. Interacts with scaffold protein; this interaction allows efficient MCP transport to the host nucleus. Interacts with capsid vertex component 2/CVC2. Interacts with the small capsomere-interacting protein/SCP.

It is found in the virion. The protein resides in the host nucleus. Functionally, self-assembles to form an icosahedral capsid with a T=16 symmetry, about 200 nm in diameter, and consisting of 150 hexons and 12 pentons (total of 162 capsomers). Hexons form the edges and faces of the capsid and are each composed of six MCP molecules. In contrast, one penton is found at each of the 12 vertices. Eleven of the pentons are MCP pentamers, while the last vertex is occupied by the portal complex. The capsid is surrounded by a layer of proteinaceous material designated the tegument which, in turn, is enclosed in an envelope of host cell-derived lipids containing virus-encoded glycoproteins. The protein is Major capsid protein of Homo sapiens (Human).